A 472-amino-acid chain; its full sequence is Nuclear receptor subfamily 0 group B member 1 (472 aa).

3 repeat units span residues 1 to 67 (MAGE…YRCC), 68 to 135 (FCGE…YRCC), and 136 to 202 (FCGE…YRSY). The interval 1–255 (MAGEDHPWQG…RLITLKDPQV (255 aa)) is 4 X 67 AA tandem repeats. Short sequence motifs (LXXLL motif) lie at residues 13–17 (LYNLL), 80–84 (LYSML), and 148–152 (LYSLL). Positions 190-471 (QSTQAMAFLY…DMMLEMLCAK (282 aa)) constitute an NR LBD domain. One copy of the 4; truncated repeat lies at 203-255 (VCGEEQPQQISVASGTPVSADQTPATPQEQPRAPWWDASPGVQRLITLKDPQV). Positions 214 to 231 (VASGTPVSADQTPATPQE) are enriched in polar residues. Disordered stretches follow at residues 214–238 (VASGTPVSADQTPATPQEQPRAPWW) and 324–343 (TTRRQETEGPEPAEPQATEQ). An AF-2 motif motif is present at residues 463-468 (MMLEML).

Belongs to the nuclear hormone receptor family. NR0 subfamily. In terms of assembly, homodimer. Interacts with NR5A1, NR5A2, NR0B2 and with COPS2. Interacts with ESRRB; represses ESRRB activity at the GATA6 promoter. Expressed in adult cerebral cortex, spinal cord, thymus, heart, lung, ovary, testis, adrenal gland, hypothalamus, spleen and kidney.

It is found in the nucleus. The protein localises to the cytoplasm. Functionally, nuclear receptor that lacks a DNA-binding domain and acts as a corepressor that inhibits the transcriptional activity of other nuclear receptors through heterodimeric interactions. Component of a cascade required for the development of the hypothalamic-pituitary-adrenal-gonadal axis. May also have a role in the development of the embryo and in the maintenance of embryonic stem cell pluripotency. The chain is Nuclear receptor subfamily 0 group B member 1 (Nr0b1) from Mus musculus (Mouse).